Reading from the N-terminus, the 475-residue chain is Vasculin-like protein 1 (475 aa).

Residues Ser-49 and Ser-76 each carry the phosphoserine modification. 2 disordered regions span residues 92-115 (NLSG…GSTG) and 160-191 (PSLN…SAKQ). Ser-202 carries the phosphoserine modification. Disordered regions lie at residues 237–271 (LVPK…EAAL) and 292–318 (PKES…RRTT). A compositionally biased stretch (low complexity) spans 294-311 (ESPSSTTPPIEISSSRLT). Thr-300 bears the Phosphothreonine mark. Ser-383 is modified (phosphoserine). The tract at residues 456 to 475 (CEDSDTETSSSETSDDDAWK) is disordered.

It belongs to the vasculin family.

Its subcellular location is the nucleus. Possible transcription factor. The sequence is that of Vasculin-like protein 1 (Gpbp1l1) from Rattus norvegicus (Rat).